The primary structure comprises 342 residues: tRNA dimethylallyltransferase (342 aa).

Residue 39–46 participates in ATP binding; sequence GPTGSGKT. 41-46 contributes to the substrate binding site; it reads TGSGKT. An interaction with substrate tRNA region spans residues 64–67; that stretch reads DSMQ.

Belongs to the IPP transferase family. In terms of assembly, monomer. Mg(2+) is required as a cofactor.

It catalyses the reaction adenosine(37) in tRNA + dimethylallyl diphosphate = N(6)-dimethylallyladenosine(37) in tRNA + diphosphate. In terms of biological role, catalyzes the transfer of a dimethylallyl group onto the adenine at position 37 in tRNAs that read codons beginning with uridine, leading to the formation of N6-(dimethylallyl)adenosine (i(6)A). This Chlamydia pneumoniae (Chlamydophila pneumoniae) protein is tRNA dimethylallyltransferase.